Consider the following 530-residue polypeptide: GATA zinc finger domain-containing protein 4 (530 aa).

2 disordered regions span residues 1–27 and 212–386; these read MSINHFNNNKNNNNKNNKNNEENFWDN and STVV…INNN. 3 stretches are compositionally biased toward low complexity: residues 7-17, 216-290, and 299-386; these read NNNKNNNNKNN, SNSP…FNNN, and NSNN…INNN. The GATA-type zinc-finger motif lies at 494 to 518; that stretch reads CSMCNIKESISWIKTMVNGQLCNAC.

This is GATA zinc finger domain-containing protein 4 (gtaD) from Dictyostelium discoideum (Social amoeba).